The sequence spans 389 residues: 3-ketoacyl-CoA thiolase (389 aa).

Cys-91 functions as the Acyl-thioester intermediate in the catalytic mechanism. Active-site proton acceptor residues include His-343 and Cys-373.

This sequence belongs to the thiolase-like superfamily. Thiolase family. Heterotetramer of two alpha chains (FadB) and two beta chains (FadA).

Its subcellular location is the cytoplasm. It catalyses the reaction an acyl-CoA + acetyl-CoA = a 3-oxoacyl-CoA + CoA. The protein operates within lipid metabolism; fatty acid beta-oxidation. Its function is as follows. Catalyzes the final step of fatty acid oxidation in which acetyl-CoA is released and the CoA ester of a fatty acid two carbons shorter is formed. The chain is 3-ketoacyl-CoA thiolase from Citrobacter koseri (strain ATCC BAA-895 / CDC 4225-83 / SGSC4696).